The primary structure comprises 617 residues: Elongation factor 4 (617 aa).

The 187-residue stretch at 17-203 (ERIRNFCIIA…RVCELVPHPV (187 aa)) folds into the tr-type G domain. GTP-binding positions include 29–34 (DHGKST) and 150–153 (NKID).

The protein belongs to the TRAFAC class translation factor GTPase superfamily. Classic translation factor GTPase family. LepA subfamily.

The protein localises to the cell membrane. The catalysed reaction is GTP + H2O = GDP + phosphate + H(+). Its function is as follows. Required for accurate and efficient protein synthesis under certain stress conditions. May act as a fidelity factor of the translation reaction, by catalyzing a one-codon backward translocation of tRNAs on improperly translocated ribosomes. Back-translocation proceeds from a post-translocation (POST) complex to a pre-translocation (PRE) complex, thus giving elongation factor G a second chance to translocate the tRNAs correctly. Binds to ribosomes in a GTP-dependent manner. The polypeptide is Elongation factor 4 (Corynebacterium urealyticum (strain ATCC 43042 / DSM 7109)).